The chain runs to 201 residues: MIGCLIGEVFALEAPTVLLNVNGVGYEIDTPLSTFCQLQKGQHVTLWTHLVVREDAQQLYGFIDAQEKLIFRTLLKVNGVGPKMALGILSTLSIELFIHTIEHDDINTLIKVPGVGRKTAERLMIELRDRFKALSVQATTGSTVTSAQIQFSSNSPIAEAEAALQSLGYKPIEAQKAIAAVKADYTEAADLIRAALKSMMK.

The segment at Met-1–Ile-63 is domain I. A domain II region spans residues Asp-64–Ser-142. The flexible linker stretch occupies residues Thr-143–Ser-152. Residues Ser-152–Lys-201 are domain III.

The protein belongs to the RuvA family. Homotetramer. Forms an RuvA(8)-RuvB(12)-Holliday junction (HJ) complex. HJ DNA is sandwiched between 2 RuvA tetramers; dsDNA enters through RuvA and exits via RuvB. An RuvB hexamer assembles on each DNA strand where it exits the tetramer. Each RuvB hexamer is contacted by two RuvA subunits (via domain III) on 2 adjacent RuvB subunits; this complex drives branch migration. In the full resolvosome a probable DNA-RuvA(4)-RuvB(12)-RuvC(2) complex forms which resolves the HJ.

The protein resides in the cytoplasm. The RuvA-RuvB-RuvC complex processes Holliday junction (HJ) DNA during genetic recombination and DNA repair, while the RuvA-RuvB complex plays an important role in the rescue of blocked DNA replication forks via replication fork reversal (RFR). RuvA specifically binds to HJ cruciform DNA, conferring on it an open structure. The RuvB hexamer acts as an ATP-dependent pump, pulling dsDNA into and through the RuvAB complex. HJ branch migration allows RuvC to scan DNA until it finds its consensus sequence, where it cleaves and resolves the cruciform DNA. This is Holliday junction branch migration complex subunit RuvA from Acinetobacter baylyi (strain ATCC 33305 / BD413 / ADP1).